Reading from the N-terminus, the 216-residue chain is Protein InaA (216 aa).

It belongs to the protein kinase superfamily. KdkA/RfaP family.

In terms of biological role, may be an environmental sensor responsive to several stimuli, including internal pH, proton motive force, temperature, and possibly other unknown factors. This chain is Protein InaA (inaA), found in Escherichia coli (strain K12).